The sequence spans 370 residues: Sensor protein GtcS (370 aa).

The next 2 membrane-spanning stretches (helical) occupy residues 2–22 (ITAYILFTVTVGVTNSIVFYL) and 40–60 (AWIVAWRLMEMVIFALSVYLY). The HAMP domain occupies 66 to 118 (KRITGPLEKITDAIQKMREGEFAQRLCFKADYELTLIQEHFNEMVAHLEKTEA). One can recognise a Histidine kinase domain in the interval 133 to 355 (DLSHDFKTPI…RLENDLPYRL (223 aa)).

It localises to the cell membrane. It catalyses the reaction ATP + protein L-histidine = ADP + protein N-phospho-L-histidine.. In terms of biological role, member of the two-component regulatory system GtcS/GtcR which may act in the control of the transcription of the grs operon which encodes the multienzymes involved in the biosynthesis of the peptide antibiotic gramicidin S. Probably activates GtcR by phosphorylation. The polypeptide is Sensor protein GtcS (gtcS) (Aneurinibacillus migulanus (Bacillus migulanus)).